Reading from the N-terminus, the 151-residue chain is Large ribosomal subunit protein uL22 (151 aa).

This sequence belongs to the universal ribosomal protein uL22 family. As to quaternary structure, part of the 50S ribosomal subunit.

Its function is as follows. This protein binds specifically to 23S rRNA. It makes multiple contacts with different domains of the 23S rRNA in the assembled 50S subunit and ribosome. Functionally, the globular domain of the protein is located near the polypeptide exit tunnel on the outside of the subunit, while an extended beta-hairpin is found that lines the wall of the exit tunnel in the center of the 70S ribosome. The polypeptide is Large ribosomal subunit protein uL22 (Thermoplasma acidophilum (strain ATCC 25905 / DSM 1728 / JCM 9062 / NBRC 15155 / AMRC-C165)).